A 185-amino-acid chain; its full sequence is Ribosome-recycling factor (185 aa).

Belongs to the RRF family.

It localises to the cytoplasm. In terms of biological role, responsible for the release of ribosomes from messenger RNA at the termination of protein biosynthesis. May increase the efficiency of translation by recycling ribosomes from one round of translation to another. This Pseudomonas putida (strain GB-1) protein is Ribosome-recycling factor.